A 192-amino-acid chain; its full sequence is Density-regulated protein homolog (192 aa).

A disordered region spans residues 62-116; it reads GLEISDEPAADGDEKKKQKRGGKGSKTGAAAAQAAASGGKKKGGGPQKVTLQREP. Residues 87–99 are compositionally biased toward low complexity; it reads KTGAAAAQAAASG. An SUI1 domain is found at 117–176; that stretch reads RGKKSVTVIKGLATFDIDLKVASKLFAQKFACGSSVTGADEIVIQGDVKDDLLDLIPEKW.

This sequence belongs to the DENR family.

This chain is Density-regulated protein homolog, found in Caenorhabditis elegans.